The chain runs to 445 residues: Phosphoglucosamine mutase (445 aa).

Catalysis depends on S102, which acts as the Phosphoserine intermediate. Positions 102, 241, 243, and 245 each coordinate Mg(2+). The residue at position 102 (S102) is a Phosphoserine.

The protein belongs to the phosphohexose mutase family. The cofactor is Mg(2+). Activated by phosphorylation.

The enzyme catalyses alpha-D-glucosamine 1-phosphate = D-glucosamine 6-phosphate. Catalyzes the conversion of glucosamine-6-phosphate to glucosamine-1-phosphate. This is Phosphoglucosamine mutase from Shewanella sp. (strain W3-18-1).